A 276-amino-acid chain; its full sequence is Bifunctional protein FolD 1 (276 aa).

Residues 161–163 (GRG), Ser186, and Thr227 contribute to the NADP(+) site.

The protein belongs to the tetrahydrofolate dehydrogenase/cyclohydrolase family. Homodimer.

The catalysed reaction is (6R)-5,10-methylene-5,6,7,8-tetrahydrofolate + NADP(+) = (6R)-5,10-methenyltetrahydrofolate + NADPH. It carries out the reaction (6R)-5,10-methenyltetrahydrofolate + H2O = (6R)-10-formyltetrahydrofolate + H(+). It participates in one-carbon metabolism; tetrahydrofolate interconversion. In terms of biological role, catalyzes the oxidation of 5,10-methylenetetrahydrofolate to 5,10-methenyltetrahydrofolate and then the hydrolysis of 5,10-methenyltetrahydrofolate to 10-formyltetrahydrofolate. This is Bifunctional protein FolD 1 from Frankia casuarinae (strain DSM 45818 / CECT 9043 / HFP020203 / CcI3).